Consider the following 520-residue polypeptide: Cytochrome P450 monooxygenase oblB (520 aa).

The next 3 membrane-spanning stretches (helical) occupy residues 17–37, 229–249, and 320–340; these read VAVISAGAFYLLNLVIYRLFL, LFMGLPWLIHVVRLIPVSILA, and IGTGTITTAGSLCFICYHIVV. Position 462 (Cys-462) interacts with heme.

It belongs to the cytochrome P450 family. Heme serves as cofactor.

It localises to the membrane. The protein operates within secondary metabolite biosynthesis; terpenoid biosynthesis. Cytochrome P450 monooxygenase; part of the gene cluster that mediates the biosynthesis of the sesterterpenes ophiobolins, fungal phytotoxins with potential anti-cancer activities. The first step of the pathway is performed by the sesterterpene synthase oblA that possesses both prenyl transferase and terpene cyclase activity, converting isopentenyl diphosphate and dimethylallyl diphosphate into geranylfarnesyl diphosphate (GFPP) and further converting GFPP into ophiobolin F, respectively. Other sesterterpenoids (C(25) terpenoids) are found as minor products of oblA. It is expected that ophiobolin F is then oxidized to ophiobolin A via ophiobolin C and ophiobolin B intermediates by the combined action of the cytochrome P450 monooxygenase oblB and the FAD-dependent oxidoreductase oblC. Although oblB catalyzes multistep oxygenations at C5 and C21/C7 in a relatively efficient manner, it is unable to convert ophiobolin F to ophiobolin C and produces instead several unexpected derivatives. This is Cytochrome P450 monooxygenase oblB from Aspergillus clavatus (strain ATCC 1007 / CBS 513.65 / DSM 816 / NCTC 3887 / NRRL 1 / QM 1276 / 107).